A 396-amino-acid chain; its full sequence is Elongation factor Tu 2 (396 aa).

The 197-residue stretch at Lys-10–Glu-206 folds into the tr-type G domain. The tract at residues Gly-19 to Thr-26 is G1. Position 19–26 (Gly-19–Thr-26) interacts with GTP. Residue Thr-26 participates in Mg(2+) binding. Positions Gly-60–Ser-64 are G2. Positions Asp-81–Gly-84 are G3. Residues Asp-81 to His-85 and Asn-136 to Asp-139 each bind GTP. Residues Asn-136–Asp-139 form a G4 region. The tract at residues Ser-174–Leu-176 is G5.

It belongs to the TRAFAC class translation factor GTPase superfamily. Classic translation factor GTPase family. EF-Tu/EF-1A subfamily. As to quaternary structure, monomer.

It localises to the cytoplasm. It catalyses the reaction GTP + H2O = GDP + phosphate + H(+). Functionally, GTP hydrolase that promotes the GTP-dependent binding of aminoacyl-tRNA to the A-site of ribosomes during protein biosynthesis. This is Elongation factor Tu 2 from Rhodospirillum rubrum (strain ATCC 11170 / ATH 1.1.1 / DSM 467 / LMG 4362 / NCIMB 8255 / S1).